The following is a 300-amino-acid chain: 7-methylguanosine phosphate-specific 5'-nucleotidase (300 aa).

D41 functions as the Nucleophile in the catalytic mechanism. Mg(2+) contacts are provided by D41 and D43. D43 acts as the Proton donor in catalysis. Residue E88 participates in CMP binding. E88 contacts N(7)-methyl-GMP. Substrate is bound by residues 156–157 and K205; that span reads SA. D230 lines the Mg(2+) pocket. K256 is modified (N6-acetyllysine).

This sequence belongs to the pyrimidine 5'-nucleotidase family. Monomer.

The protein localises to the cytoplasm. The enzyme catalyses N(7)-methyl-GMP + H2O = N(7)-methylguanosine + phosphate. It carries out the reaction CMP + H2O = cytidine + phosphate. It catalyses the reaction a ribonucleoside 5'-phosphate + H2O = a ribonucleoside + phosphate. Its function is as follows. Specifically hydrolyzes 7-methylguanosine monophosphate (m(7)GMP) to 7-methylguanosine and inorganic phosphate. The specific activity for m(7)GMP may protect cells against undesired salvage of m(7)GMP and its incorporation into nucleic acids. Also has weak activity for CMP. UMP and purine nucleotides are poor substrates. The polypeptide is 7-methylguanosine phosphate-specific 5'-nucleotidase (NT5C3B) (Homo sapiens (Human)).